The chain runs to 485 residues: Cysteine protease atg4da (485 aa).

Residues 22-46 (ASASSKRHLGHGAVPDGIREGSGEP) are disordered. The active-site Nucleophile is the Cys131. Catalysis depends on residues Asp368 and His370.

It belongs to the peptidase C54 family.

The protein resides in the cytoplasm. It carries out the reaction [protein]-C-terminal L-amino acid-glycyl-phosphatidylethanolamide + H2O = [protein]-C-terminal L-amino acid-glycine + a 1,2-diacyl-sn-glycero-3-phosphoethanolamine. It catalyses the reaction [protein]-C-terminal L-amino acid-glycyl-phosphatidylserine + H2O = [protein]-C-terminal L-amino acid-glycine + a 1,2-diacyl-sn-glycero-3-phospho-L-serine. Cysteine protease that plays a key role in autophagy by mediating both proteolytic activation and delipidation of ATG8 family proteins. The protease activity is required for proteolytic activation of ATG8 family proteins to reveal a C-terminal glycine. Exposure of the glycine at the C-terminus is essential for ATG8 proteins conjugation to phosphatidylethanolamine (PE) and insertion to membranes, which is necessary for autophagy. In addition to the protease activity, also mediates delipidation of ATG8 family proteins. Catalyzes delipidation of PE-conjugated forms of ATG8 proteins during macroautophagy. Also involved in non-canonical autophagy, a parallel pathway involving conjugation of ATG8 proteins to single membranes at endolysosomal compartments, by catalyzing delipidation of ATG8 proteins conjugated to phosphatidylserine (PS). ATG4D plays a role in the autophagy-mediated neuronal homeostasis in the central nervous system. The sequence is that of Cysteine protease atg4da from Danio rerio (Zebrafish).